The primary structure comprises 1332 residues: Sister chromatid cohesion protein PDS5 homolog A (1332 aa).

Met1 carries the post-translational modification N-acetylmethionine. Residues 392 to 428 form an HEAT repeat; sequence ALVNDQLLGFVRERTLDKRWRVRKEAMMGLAQLYKKY. A Phosphoserine modification is found at Ser1096. The segment at 1138-1332 is disordered; sequence GVLGTVNKPL…PAERQIDLQR (195 aa). Lys1145 bears the N6-acetyllysine mark. The span at 1160–1173 shows a compositional bias: polar residues; that stretch reads GTETGSNINANSEL. Phosphoserine occurs at positions 1174 and 1194. Position 1207 is a phosphothreonine (Thr1207). N6-acetyllysine is present on Lys1210. Residues 1222-1232 are compositionally biased toward polar residues; sequence SDQSTQGNISS. Lys1288 is modified (N6-acetyllysine). Ser1303 carries the post-translational modification Phosphoserine. The span at 1316–1332 shows a compositional bias: basic and acidic residues; sequence DGAKKAVPAERQIDLQR.

It belongs to the PDS5 family. As to quaternary structure, interacts with the cohesin complex. Interacts with WAPL (via FGF motifs) or CDCA5 (via the FGF motif); the interaction is direct, cohesin-dependent and competitive. Interacts with SMC3. Interacts with TP63.

Its subcellular location is the nucleus. In terms of biological role, probable regulator of sister chromatid cohesion in mitosis which may stabilize cohesin complex association with chromatin. May couple sister chromatid cohesion during mitosis to DNA replication. Cohesion ensures that chromosome partitioning is accurate in both meiotic and mitotic cells and plays an important role in DNA repair. This is Sister chromatid cohesion protein PDS5 homolog A (Pds5a) from Mus musculus (Mouse).